Consider the following 471-residue polypeptide: D-hydantoinase (471 aa).

Residues His-58, His-60, and Lys-150 each coordinate Zn(2+). An N6-carboxylysine modification is found at Lys-150. A substrate-binding site is contributed by Tyr-155. Zn(2+) contacts are provided by His-183 and His-239. Position 288 (Ser-288) interacts with substrate. Asp-315 provides a ligand contact to Zn(2+). Asn-337 lines the substrate pocket.

Belongs to the metallo-dependent hydrolases superfamily. Hydantoinase/dihydropyrimidinase family. As to quaternary structure, homotetramer. Requires Zn(2+) as cofactor. The cofactor is Ni(2+). Co(2+) serves as cofactor. Mn(2+) is required as a cofactor. Post-translationally, carboxylation allows a single lysine to coordinate two zinc ions.

Completely inhibited by p-chloromercuribenzoate and partially inhibited by metal chelating agents. Functionally, catalyzes the stereospecific hydrolysis of the cyclic amide bond of D-hydantoin. Has no activity on dihydropyrimidines. The polypeptide is D-hydantoinase (Geobacillus stearothermophilus (Bacillus stearothermophilus)).